A 71-amino-acid chain; its full sequence is UPF0435 protein BLi00816/BL03111 (71 aa).

The protein belongs to the UPF0435 family.

The protein is UPF0435 protein BLi00816/BL03111 of Bacillus licheniformis (strain ATCC 14580 / DSM 13 / JCM 2505 / CCUG 7422 / NBRC 12200 / NCIMB 9375 / NCTC 10341 / NRRL NRS-1264 / Gibson 46).